A 133-amino-acid chain; its full sequence is Ribonuclease P protein component (133 aa).

This sequence belongs to the RnpA family. Consists of a catalytic RNA component (M1 or rnpB) and a protein subunit.

The catalysed reaction is Endonucleolytic cleavage of RNA, removing 5'-extranucleotides from tRNA precursor.. Functionally, RNaseP catalyzes the removal of the 5'-leader sequence from pre-tRNA to produce the mature 5'-terminus. It can also cleave other RNA substrates such as 4.5S RNA. The protein component plays an auxiliary but essential role in vivo by binding to the 5'-leader sequence and broadening the substrate specificity of the ribozyme. The chain is Ribonuclease P protein component from Corynebacterium glutamicum (strain ATCC 13032 / DSM 20300 / JCM 1318 / BCRC 11384 / CCUG 27702 / LMG 3730 / NBRC 12168 / NCIMB 10025 / NRRL B-2784 / 534).